The sequence spans 423 residues: COP9 signalosome complex subunit 3 (423 aa).

Residues 197–365 (NFERAMYFYE…GMVCFHDSPE (169 aa)) enclose the PCI domain. The span at 401-410 (PQFVQKSMGS) shows a compositional bias: polar residues. The disordered stretch occupies residues 401–423 (PQFVQKSMGSQEDDSGSKPSSYS).

This sequence belongs to the CSN3 family. In terms of assembly, component of the CSN complex, probably composed of cops1, cops2, cops3, cops4, cops5, cops6, cops7, cops8 and cops9.

The protein resides in the cytoplasm. Its subcellular location is the nucleus. Functionally, component of the COP9 signalosome complex (CSN), a complex involved in various cellular and developmental processes. The CSN complex is an essential regulator of the ubiquitin (Ubl) conjugation pathway by mediating the deneddylation of the cullin subunits of E3 ligase complexes, leading to modify the Ubl ligase activity. The sequence is that of COP9 signalosome complex subunit 3 (cops3) from Xenopus laevis (African clawed frog).